The following is a 774-amino-acid chain: Ion-translocating oxidoreductase complex subunit C (774 aa).

2 consecutive 4Fe-4S ferredoxin-type domains span residues 368 to 398 (ELTS…QQLQ) and 408 to 437 (KCEE…VQYY). 8 residues coordinate [4Fe-4S] cluster: Cys378, Cys381, Cys384, Cys388, Cys417, Cys420, Cys423, and Cys427. Residues 459-490 (ARFEEKKARMERDKAERENRFKQAAEDRRKEM) are compositionally biased toward basic and acidic residues. Disordered regions lie at residues 459–496 (ARFE…QGGS) and 533–774 (AKQA…EEKD). Over residues 533 to 545 (AKQAEAAQSGASE) the composition is skewed to low complexity. Basic and acidic residues predominate over residues 550 to 572 (EMAKLREERKRQARERKAQKGEV). Residues 605-618 (TESAAQPAQATPSS) are compositionally biased toward low complexity. 4 stretches are compositionally biased toward polar residues: residues 645–658 (TEST…TPSS), 686–698 (ESAA…TPSS), 725–738 (TESA…TPSS), and 762–774 (QQSS…EEKD).

This sequence belongs to the 4Fe4S bacterial-type ferredoxin family. RnfC subfamily. The complex is composed of six subunits: RnfA, RnfB, RnfC, RnfD, RnfE and RnfG. It depends on [4Fe-4S] cluster as a cofactor.

It localises to the cell inner membrane. Its function is as follows. Part of a membrane-bound complex that couples electron transfer with translocation of ions across the membrane. The chain is Ion-translocating oxidoreductase complex subunit C from Vibrio cholerae serotype O1 (strain ATCC 39315 / El Tor Inaba N16961).